Here is a 125-residue protein sequence, read N- to C-terminus: Temptin (125 aa).

The first 22 residues, 1–22 (MEQKRTLRVFLAVSLLCALANA), serve as a signal peptide directing secretion. 2 cysteine pairs are disulfide-bonded: Cys-40–Cys-125 and Cys-79–Cys-99. Residues 78–125 (LCDMDSDGDGRSNGVELGDPECVWSQGETPARTTDLSHPGFDEATVSC) form a disordered region. Residues 103 to 113 (QGETPARTTDL) show a composition bias toward polar residues.

As to quaternary structure, binds to attractin and enticin. Produced by the albumen gland of the egg cordons.

The protein localises to the secreted. Functionally, a component of the complex of water-borne protein pheromones that stimulates attraction and mating behavior. Modulates pheromone signaling by direct binding to attractin. The sequence is that of Temptin from Aplysia californica (California sea hare).